The chain runs to 177 residues: Large ribosomal subunit protein uL6 (177 aa).

The protein belongs to the universal ribosomal protein uL6 family. Part of the 50S ribosomal subunit.

Functionally, this protein binds to the 23S rRNA, and is important in its secondary structure. It is located near the subunit interface in the base of the L7/L12 stalk, and near the tRNA binding site of the peptidyltransferase center. The protein is Large ribosomal subunit protein uL6 of Shewanella frigidimarina (strain NCIMB 400).